A 136-amino-acid polypeptide reads, in one-letter code: NADPH-dependent 7-cyano-7-deazaguanine reductase (136 aa).

Catalysis depends on cysteine 53, which acts as the Thioimide intermediate. Residue aspartate 60 is the Proton donor of the active site. Substrate-binding positions include 75–77 (VEL) and 94–95 (HE).

Belongs to the GTP cyclohydrolase I family. QueF type 1 subfamily.

The protein localises to the cytoplasm. The catalysed reaction is 7-aminomethyl-7-carbaguanine + 2 NADP(+) = 7-cyano-7-deazaguanine + 2 NADPH + 3 H(+). It participates in tRNA modification; tRNA-queuosine biosynthesis. In terms of biological role, catalyzes the NADPH-dependent reduction of 7-cyano-7-deazaguanine (preQ0) to 7-aminomethyl-7-deazaguanine (preQ1). The chain is NADPH-dependent 7-cyano-7-deazaguanine reductase from Nostoc sp. (strain PCC 7120 / SAG 25.82 / UTEX 2576).